The sequence spans 576 residues: uncharacterized protein (576 aa).

Belongs to the FadG family.

This is an uncharacterized protein from Bacillus subtilis (strain 168).